Here is a 361-residue protein sequence, read N- to C-terminus: D-malate dehydrogenase [decarboxylating] (361 aa).

Aspartate 224, aspartate 248, and aspartate 252 together coordinate Mn(2+).

It belongs to the isocitrate and isopropylmalate dehydrogenases family. Mg(2+) is required as a cofactor. The cofactor is Mn(2+).

It is found in the cytoplasm. It catalyses the reaction (R)-malate + NAD(+) = pyruvate + CO2 + NADH. Its function is as follows. Catalyzes the NAD(+)-dependent oxidative decarboxylation of D-malate into pyruvate. Is essential for aerobic growth on D-malate as the sole carbon source. But is not required for anaerobic D-malate utilization, although DmlA is expressed and active in those conditions. Appears to be not able to use L-tartrate as a substrate for dehydrogenation instead of D-malate. This chain is D-malate dehydrogenase [decarboxylating] (dmlA), found in Escherichia coli (strain K12).